Reading from the N-terminus, the 182-residue chain is Functional amyloid subunit FapB (182 aa).

The signal sequence occupies residues 1–18 (MTHSWLLLTVLGCSAAMA). The FapB_R1 repeat unit spans residues 22-58 (NQALIDNAGKQYTGVLSVNQAAGNQHQQINSRAISLG). Residues 80-114 (SAAIQGSAFSNGNGILGVNQSAGANNQMINAVRIS) form a FapB_R2 repeat. One copy of the FapB_R3 repeat lies at 150–180 (SDQAFTGSRGVVQVNQSAGVGNRMANTLGVT).

The protein belongs to the FapB/FapC family. Forms fibrils in vitro; in the presence of FapA the fibrils are slightly narrower. A minor component of purified amyloid fibrils. Fibrils are resistant to boiling in 2% (weight/vol) SDS and require &gt;90% (vol/vol) formic acid to dissolve.

Its subcellular location is the fimbrium. The protein resides in the secreted. In terms of biological role, a minor component of the functional amyloid in this bacterium. Probably nucleates fibril formation; FapB nucleates fibrillation its own, FapA inhibits FapB fibril elongation. Upon overexpression of the endogenous six-gene locus (fapA-fapF) in situ, cells form large clumps during liquid growth, make large amounts of biofilm and produce amyloid fibrils. Expression of the 6 gene operon in E.coli strain BL21(DE3) induces flocculation and biofilm formation with copious extracellular fibrils. In Pseudomonas fluorescens, this protein is Functional amyloid subunit FapB.